A 178-amino-acid polypeptide reads, in one-letter code: MSKTGTKITFYEDKNFQGRRYDCDCDCADFHTYLSRCNSIKVEGGTWAVYERPNFAGYMYILPQGEYPEYQRWMGLNDRLSSCRAVHLPSGGQYKIQIFEKGDFSGQMYETTEDCPSIMEQFHMREIHSCKVLEGVWIFYELPNYRGRQYLLDKKEYRKPIDWGAASPAVQSFRRIVE.

Serine 2 carries the N-acetylserine modification. An N-terminal arm region spans residues 2 to 5 (SKTG). 2 consecutive Beta/gamma crystallin 'Greek key' domains span residues 6–44 (TKIT…KVEG) and 45–87 (GTWA…RAVH). The segment at 88–93 (LPSGGQ) is connecting peptide. 2 Beta/gamma crystallin 'Greek key' domains span residues 94–134 (YKIQ…KVLE) and 135–177 (GVWI…RRIV).

It belongs to the beta/gamma-crystallin family. Monomer.

Functionally, crystallins are the dominant structural components of the vertebrate eye lens. This chain is Gamma-crystallin S (CRYGS), found in Homo sapiens (Human).